We begin with the raw amino-acid sequence, 171 residues long: MSTKDPHRLPHEKGFHISWDQIHRDSRALAWRLDGQGPDEGAWRAVVAITRGGMAPAMIVSRELDIRTVDTISVKSYHHQAQGQAQVLKAPDAGLMGDGTGILVIDDLVDSGKTLELVREMYPNAHFATVYAKPKGRPMVDTFITEVSQDTWIFFPWDMALQYVEPYRGTD.

Residues 51-52 (RG) and 106-114 (DDLVDSGKT) contribute to the 5-phospho-alpha-D-ribose 1-diphosphate site. Asp-107 contacts Mg(2+). Residues Asp-110 and Ile-153 each coordinate guanine. Xanthine is bound by residues Asp-110 and Ile-153. Residues 110–114 (DSGKT) and 152–153 (WI) contribute to the GMP site.

The protein belongs to the purine/pyrimidine phosphoribosyltransferase family. XGPT subfamily. In terms of assembly, homotetramer. Mg(2+) serves as cofactor.

It is found in the cell inner membrane. The catalysed reaction is GMP + diphosphate = guanine + 5-phospho-alpha-D-ribose 1-diphosphate. It catalyses the reaction XMP + diphosphate = xanthine + 5-phospho-alpha-D-ribose 1-diphosphate. The enzyme catalyses IMP + diphosphate = hypoxanthine + 5-phospho-alpha-D-ribose 1-diphosphate. Its pathway is purine metabolism; GMP biosynthesis via salvage pathway; GMP from guanine: step 1/1. The protein operates within purine metabolism; XMP biosynthesis via salvage pathway; XMP from xanthine: step 1/1. Its function is as follows. Purine salvage pathway enzyme that catalyzes the transfer of the ribosyl-5-phosphate group from 5-phospho-alpha-D-ribose 1-diphosphate (PRPP) to the N9 position of the 6-oxopurines guanine and xanthine to form the corresponding ribonucleotides GMP (guanosine 5'-monophosphate) and XMP (xanthosine 5'-monophosphate), with the release of PPi. To a lesser extent, also acts on hypoxanthine. This Ruegeria pomeroyi (strain ATCC 700808 / DSM 15171 / DSS-3) (Silicibacter pomeroyi) protein is Xanthine-guanine phosphoribosyltransferase.